We begin with the raw amino-acid sequence, 191 residues long: ATP synthase subunit b 2 (191 aa).

The span at 1–12 (MAESHGEAKGGE) shows a compositional bias: basic and acidic residues. The tract at residues 1–31 (MAESHGEAKGGEAKGTASAHTEAEGGHGFPP) is disordered. Residues 38-60 (PSQIASLVIAFVALYVIVSRVAL) form a helical membrane-spanning segment.

This sequence belongs to the ATPase B chain family. As to quaternary structure, F-type ATPases have 2 components, F(1) - the catalytic core - and F(0) - the membrane proton channel. F(1) has five subunits: alpha(3), beta(3), gamma(1), delta(1), epsilon(1). F(0) has three main subunits: a(1), b(2) and c(10-14). The alpha and beta chains form an alternating ring which encloses part of the gamma chain. F(1) is attached to F(0) by a central stalk formed by the gamma and epsilon chains, while a peripheral stalk is formed by the delta and b chains.

It is found in the cell inner membrane. In terms of biological role, f(1)F(0) ATP synthase produces ATP from ADP in the presence of a proton or sodium gradient. F-type ATPases consist of two structural domains, F(1) containing the extramembraneous catalytic core and F(0) containing the membrane proton channel, linked together by a central stalk and a peripheral stalk. During catalysis, ATP synthesis in the catalytic domain of F(1) is coupled via a rotary mechanism of the central stalk subunits to proton translocation. Its function is as follows. Component of the F(0) channel, it forms part of the peripheral stalk, linking F(1) to F(0). The b'-subunit is a diverged and duplicated form of b found in plants and photosynthetic bacteria. The protein is ATP synthase subunit b 2 (atpF2) of Bradyrhizobium sp. (strain ORS 278).